We begin with the raw amino-acid sequence, 483 residues long: Regulatory protein ViaA (483 aa).

Belongs to the ViaA family. As to quaternary structure, homodimer. Interacts with RavA.

It is found in the cytoplasm. Functionally, component of the RavA-ViaA chaperone complex, which may act on the membrane to optimize the function of some of the respiratory chains. ViaA stimulates the ATPase activity of RavA. The chain is Regulatory protein ViaA from Cronobacter sakazakii (strain ATCC BAA-894) (Enterobacter sakazakii).